Consider the following 260-residue polypeptide: Aliphatic sulfonates import ATP-binding protein SsuB 1 (260 aa).

Positions 29 to 243 constitute an ABC transporter domain; sequence VRVDGLTRSF…DITDPRFAEL (215 aa). ATP is bound at residue 61-68; it reads GRSGCGKS.

It belongs to the ABC transporter superfamily. Aliphatic sulfonates importer (TC 3.A.1.17.2) family. In terms of assembly, the complex is composed of two ATP-binding proteins (SsuB), two transmembrane proteins (SsuC) and a solute-binding protein (SsuA).

The protein localises to the cell membrane. The catalysed reaction is ATP + H2O + aliphatic sulfonate-[sulfonate-binding protein]Side 1 = ADP + phosphate + aliphatic sulfonateSide 2 + [sulfonate-binding protein]Side 1.. Its function is as follows. Part of the ABC transporter complex SsuABC involved in aliphatic sulfonates import. Responsible for energy coupling to the transport system. The protein is Aliphatic sulfonates import ATP-binding protein SsuB 1 of Streptomyces avermitilis (strain ATCC 31267 / DSM 46492 / JCM 5070 / NBRC 14893 / NCIMB 12804 / NRRL 8165 / MA-4680).